We begin with the raw amino-acid sequence, 177 residues long: Adenine phosphoribosyltransferase (177 aa).

It belongs to the purine/pyrimidine phosphoribosyltransferase family. As to quaternary structure, homodimer.

Its subcellular location is the cytoplasm. The catalysed reaction is AMP + diphosphate = 5-phospho-alpha-D-ribose 1-diphosphate + adenine. It participates in purine metabolism; AMP biosynthesis via salvage pathway; AMP from adenine: step 1/1. Catalyzes a salvage reaction resulting in the formation of AMP, that is energically less costly than de novo synthesis. The polypeptide is Adenine phosphoribosyltransferase (Leptospira interrogans serogroup Icterohaemorrhagiae serovar copenhageni (strain Fiocruz L1-130)).